The chain runs to 523 residues: 2-isopropylmalate synthase (523 aa).

In terms of domain architecture, Pyruvate carboxyltransferase spans 5 to 267 (VIIFDTTLRD…HTAINHQEIW (263 aa)). Mn(2+)-binding residues include D14, H202, H204, and N238. Residues 392-523 (RLDYFSVQSG…QHNENNKETV (132 aa)) are regulatory domain.

This sequence belongs to the alpha-IPM synthase/homocitrate synthase family. LeuA type 1 subfamily. In terms of assembly, homodimer. The cofactor is Mn(2+).

It localises to the cytoplasm. The catalysed reaction is 3-methyl-2-oxobutanoate + acetyl-CoA + H2O = (2S)-2-isopropylmalate + CoA + H(+). Its pathway is amino-acid biosynthesis; L-leucine biosynthesis; L-leucine from 3-methyl-2-oxobutanoate: step 1/4. Its function is as follows. Catalyzes the condensation of the acetyl group of acetyl-CoA with 3-methyl-2-oxobutanoate (2-ketoisovalerate) to form 3-carboxy-3-hydroxy-4-methylpentanoate (2-isopropylmalate). This is 2-isopropylmalate synthase from Escherichia coli (strain K12 / MC4100 / BW2952).